A 399-amino-acid chain; its full sequence is Enoyl-[acyl-carrier-protein] reductase [NADH] (399 aa).

Residues 48–53 (GASTGY), 74–75 (FE), 111–112 (DA), and 139–140 (LA) contribute to the NAD(+) site. Tyr-225 is a substrate binding site. The active-site Proton donor is the Tyr-235. Residues Lys-244 and 274-276 (VVT) each bind NAD(+).

This sequence belongs to the TER reductase family. In terms of assembly, monomer.

It carries out the reaction a 2,3-saturated acyl-[ACP] + NAD(+) = a (2E)-enoyl-[ACP] + NADH + H(+). The protein operates within lipid metabolism; fatty acid biosynthesis. Involved in the final reduction of the elongation cycle of fatty acid synthesis (FAS II). Catalyzes the reduction of a carbon-carbon double bond in an enoyl moiety that is covalently linked to an acyl carrier protein (ACP). The polypeptide is Enoyl-[acyl-carrier-protein] reductase [NADH] (Yersinia pestis bv. Antiqua (strain Antiqua)).